The following is a 296-amino-acid chain: Pseudouridine-5'-phosphate glycosidase (296 aa).

The active-site Proton donor is E21. 2 residues coordinate substrate: K81 and V101. D130 contributes to the Mn(2+) binding site. Substrate is bound at residue S132–D134. K151 functions as the Nucleophile in the catalytic mechanism.

The protein belongs to the pseudouridine-5'-phosphate glycosidase family. In terms of assembly, homotrimer. Mn(2+) is required as a cofactor.

It carries out the reaction D-ribose 5-phosphate + uracil = psi-UMP + H2O. Its function is as follows. Catalyzes the reversible cleavage of pseudouridine 5'-phosphate (PsiMP) to ribose 5-phosphate and uracil. Functions biologically in the cleavage direction, as part of a pseudouridine degradation pathway. The protein is Pseudouridine-5'-phosphate glycosidase of Fervidobacterium nodosum (strain ATCC 35602 / DSM 5306 / Rt17-B1).